A 380-amino-acid chain; its full sequence is S-adenosylmethionine synthase (380 aa).

His15 lines the ATP pocket. Mg(2+) is bound at residue Asp17. Position 43 (Glu43) interacts with K(+). L-methionine-binding residues include Glu56 and Gln99. The segment at 99 to 109 (QSPDIAMGIDN) is flexible loop. Residues 164 to 166 (DAK), 230 to 231 (RF), Asp239, 245 to 246 (RK), and Lys266 each bind ATP. Asp239 is a binding site for L-methionine. An L-methionine-binding site is contributed by Lys270.

It belongs to the AdoMet synthase family. In terms of assembly, homotetramer; dimer of dimers. Requires Mg(2+) as cofactor. It depends on K(+) as a cofactor.

It is found in the cytoplasm. The enzyme catalyses L-methionine + ATP + H2O = S-adenosyl-L-methionine + phosphate + diphosphate. The protein operates within amino-acid biosynthesis; S-adenosyl-L-methionine biosynthesis; S-adenosyl-L-methionine from L-methionine: step 1/1. Its function is as follows. Catalyzes the formation of S-adenosylmethionine (AdoMet) from methionine and ATP. The overall synthetic reaction is composed of two sequential steps, AdoMet formation and the subsequent tripolyphosphate hydrolysis which occurs prior to release of AdoMet from the enzyme. The chain is S-adenosylmethionine synthase from Rickettsia prowazekii (strain Madrid E).